The sequence spans 113 residues: Large ribosomal subunit protein uL22 (113 aa).

It belongs to the universal ribosomal protein uL22 family. Part of the 50S ribosomal subunit.

Its function is as follows. This protein binds specifically to 23S rRNA; its binding is stimulated by other ribosomal proteins, e.g. L4, L17, and L20. It is important during the early stages of 50S assembly. It makes multiple contacts with different domains of the 23S rRNA in the assembled 50S subunit and ribosome. The globular domain of the protein is located near the polypeptide exit tunnel on the outside of the subunit, while an extended beta-hairpin is found that lines the wall of the exit tunnel in the center of the 70S ribosome. This Syntrophomonas wolfei subsp. wolfei (strain DSM 2245B / Goettingen) protein is Large ribosomal subunit protein uL22.